The chain runs to 383 residues: BRISC and BRCA1-A complex member 2 (383 aa).

At M1 the chain carries N-acetylmethionine. S2 carries the post-translational modification Phosphoserine. UEV-like stretches follow at residues 30–147 (DATN…TLLE) and 275–364 (IAAF…RAKA).

It belongs to the BABAM2 family. In terms of assembly, component of the ARISC complex, at least composed of UIMC1/RAP80, ABRAXAS1, BRCC3/BRCC36, BABAM2 and BABAM1/NBA1. Component of the BRCA1-A complex, at least composed of BRCA1, BARD1, UIMC1/RAP80, ABRAXAS1, BRCC3/BRCC36, BABAM2 and BABAM1/NBA1. In the BRCA1-A complex, interacts directly with ABRAXAS1, BRCC3/BRCC36 and BABAM1/NBA1. Binds polyubiquitin. Component of the BRISC complex, at least composed of ABRAXAS2, BRCC3/BRCC36, BABAM2 and BABAM1/NBA1. Identified in a complex with SHMT2 and the other subunits of the BRISC complex. Component of the BRCA1/BRCA2 containing complex (BRCC), which also contains BRCA1, BRCA2, BARD1, BRCC3/BRCC36 and RAD51. BRCC is a ubiquitin E3 ligase complex that enhances cellular survival following DNA damage. May interact with FAS and TNFRSF1A. Expressed in all cell lines examined. Highly expressed in placenta.

The protein resides in the cytoplasm. The protein localises to the nucleus. Its function is as follows. Component of the BRCA1-A complex, a complex that specifically recognizes 'Lys-63'-linked ubiquitinated histones H2A and H2AX at DNA lesions sites, leading to target the BRCA1-BARD1 heterodimer to sites of DNA damage at double-strand breaks (DSBs). The BRCA1-A complex also possesses deubiquitinase activity that specifically removes 'Lys-63'-linked ubiquitin on histones H2A and H2AX. In the BRCA1-A complex, it acts as an adapter that bridges the interaction between BABAM1/NBA1 and the rest of the complex, thereby being required for the complex integrity and modulating the E3 ubiquitin ligase activity of the BRCA1-BARD1 heterodimer. Component of the BRISC complex, a multiprotein complex that specifically cleaves 'Lys-63'-linked ubiquitin in various substrates. Within the BRISC complex, acts as an adapter that bridges the interaction between BABAM1/NBA1 and the rest of the complex, thereby being required for the complex integrity. The BRISC complex is required for normal mitotic spindle assembly and microtubule attachment to kinetochores via its role in deubiquitinating NUMA1. The BRISC complex plays a role in interferon signaling via its role in the deubiquitination of the interferon receptor IFNAR1; deubiquitination increases IFNAR1 activity by enhancing its stability and cell surface expression. Down-regulates the response to bacterial lipopolysaccharide (LPS) via its role in IFNAR1 deubiquitination. May play a role in homeostasis or cellular differentiation in cells of neural, epithelial and germline origins. May also act as a death receptor-associated anti-apoptotic protein, which inhibits the mitochondrial apoptotic pathway. May regulate TNF-alpha signaling through its interactions with TNFRSF1A; however these effects may be indirect. This Homo sapiens (Human) protein is BRISC and BRCA1-A complex member 2.